Consider the following 855-residue polypeptide: Inactive rhomboid protein 1 (855 aa).

Residues 1–411 (MSEARRDSTS…HRPFFTYWLT (411 aa)) are Cytoplasmic-facing. Phosphoserine is present on residues Ser76 and Ser176. Residues Thr180 and Thr183 each carry the phosphothreonine modification. Position 390 is a phosphoserine (Ser390). Residues 412-432 (FVHSLVTILAVCIYGIAPVGF) traverse the membrane as a helical segment. The Lumenal segment spans residues 433–655 (SQHETVDSVL…NPEVPDQFYR (223 aa)). N-linked (GlcNAc...) asparagine glycosylation is present at Asn583. Residues 656-676 (LWLSLFLHAGILHCLVSICFQ) form a helical membrane-spanning segment. Residues 677 to 691 (MTVLRDLEKLAGWHR) lie on the Cytoplasmic side of the membrane. Residues 692 to 712 (IAIIYLLSGVTGNLASAIFLP) form a helical membrane-spanning segment. The Lumenal segment spans residues 713–714 (YR). A helical transmembrane segment spans residues 715–735 (AEVGPAGSQFGILACLFVELF). The Cytoplasmic portion of the chain corresponds to 736-746 (QSWQILARPWR). Residues 747 to 767 (AFFKLLAVVLFLFTFGLLPWI) form a helical membrane-spanning segment. Residues 768 to 772 (DNFAH) lie on the Lumenal side of the membrane. The helical transmembrane segment at 773-793 (ISGFISGLFLSFAFLPYISFG) threads the bilayer. Over 794-803 (KFDLYRKRCQ) the chain is Cytoplasmic. Residues 804 to 824 (IIIFQVVFLGLLAGLVVLFYV) traverse the membrane as a helical segment. Topologically, residues 825–855 (YPVRCEWCEFLTCIPFTDKFCEKYELDAQLH) are lumenal.

Belongs to the peptidase S54 family. As to quaternary structure, homodimer, or homooligomer. Interacts with TGFA and HBEGF. Interacts with EGF; may retain EGF in the endoplasmic reticulum and regulates its degradation through the endoplasmic reticulum-associated degradation (ERAD). Interacts (via cytoplasmic N-terminus) with FRMD8/iTAP; this interaction leads to mutual protein stabilization. Interacts with ADAM17/TACE. N-glycosylated. Highly expressed in cerebellum, cerebrum, heart, skeletal muscle, placenta, pancreatic islet and testis. Detected at lower levels in colon, kidney, small intestine and lung.

Its subcellular location is the endoplasmic reticulum membrane. It is found in the golgi apparatus membrane. Its function is as follows. Regulates ADAM17 protease, a sheddase of the epidermal growth factor (EGF) receptor ligands and TNF, thereby plays a role in sleep, cell survival, proliferation, migration and inflammation. Does not exhibit any protease activity on its own. This chain is Inactive rhomboid protein 1 (RHBDF1), found in Homo sapiens (Human).